Consider the following 229-residue polypeptide: Ribonuclease T (229 aa).

The region spanning Val-23–Phe-197 is the Exonuclease domain. Residues Asp-26, Glu-28, His-184, and Asp-189 each contribute to the Mg(2+) site. The active-site Proton donor/acceptor is His-184.

It belongs to the RNase T family. In terms of assembly, homodimer. The cofactor is Mg(2+).

Functionally, trims short 3' overhangs of a variety of RNA species, leaving a one or two nucleotide 3' overhang. Responsible for the end-turnover of tRNA: specifically removes the terminal AMP residue from uncharged tRNA (tRNA-C-C-A). Also appears to be involved in tRNA biosynthesis. The chain is Ribonuclease T from Haemophilus influenzae (strain ATCC 51907 / DSM 11121 / KW20 / Rd).